The following is a 639-amino-acid chain: Sperm-associated antigen 16 protein (639 aa).

A coiled-coil region spans residues 146–218 (DVYSQVMLLE…GLKLHYASYE (73 aa)). The tract at residues 280 to 333 (RESGDRAGHSCEKENSSEGPTQKSLREAREEVGYKSKLKNEKKDSEFPVDMQPD) is disordered. Composition is skewed to basic and acidic residues over residues 281–295 (ESGDRAGHSCEKENS) and 303–325 (SLREAREEVGYKSKLKNEKKDSE). WD repeat units follow at residues 358-397 (LHELPVSCIVMHPCRDYLISCSEDRLWKMVGLPQGNVLLT), 400-439 (GHTDWLSGCCFHPSGSKLATSSGDSTIKLWDLNKGECTLT), 442-481 (GHNHAVWSCTWHSCGDFVASASLDMTSKIWDVNSERCRYT), 484-523 (GHTDSVNSIEFFPFSNILLTASADKTLSVWDARTGKCEQS), 526-565 (GHMHSVNDATFTPRGHIIASCDARGVTKLWDFRKLIPIVS), 568-608 (VGPS…HKLV), and 609-639 (GHESEVHSVVFSHLGENLYSGGSDGTIRLWI).

Interacts with SPAG6 and STK36. Post-translationally, phosphorylated by TSSK2. In terms of tissue distribution, expressed in testis.

The protein resides in the cytoplasm. It is found in the cytoskeleton. The protein localises to the cilium axoneme. Its subcellular location is the flagellum axoneme. It localises to the cell projection. The protein resides in the cilium. It is found in the flagellum. Necessary for sperm flagellar function. Plays a role in motile ciliogenesis. May help to recruit STK36 to the cilium or apical surface of the cell to initiate subsequent steps of construction of the central pair apparatus of motile cilia. In Mus musculus (Mouse), this protein is Sperm-associated antigen 16 protein (Spag16).